A 157-amino-acid chain; its full sequence is Protein Smg homolog (157 aa).

This sequence belongs to the Smg family.

This is Protein Smg homolog from Aliivibrio fischeri (strain MJ11) (Vibrio fischeri).